The primary structure comprises 355 residues: Peptide chain release factor 1 (355 aa).

Q233 bears the N5-methylglutamine mark. Residues 282-293 (RKKEQARADSRR) are compositionally biased toward basic and acidic residues. The segment at 282-305 (RKKEQARADSRRGQVGSGDRSERI) is disordered.

This sequence belongs to the prokaryotic/mitochondrial release factor family. Post-translationally, methylated by PrmC. Methylation increases the termination efficiency of RF1.

Its subcellular location is the cytoplasm. Peptide chain release factor 1 directs the termination of translation in response to the peptide chain termination codons UAG and UAA. The chain is Peptide chain release factor 1 from Rickettsia rickettsii (strain Iowa).